Here is a 353-residue protein sequence, read N- to C-terminus: Suppressor of RNA-mediated gene silencing (353 aa).

Belongs to the phytoreovirus non-structural protein 10 family.

In terms of biological role, suppressor of RNA-mediated gene silencing, also known as post-transcriptional gene silencing (PTGS), a mechanism of plant viral defense that limits the accumulation of viral RNAs. This chain is Suppressor of RNA-mediated gene silencing, found in Rice dwarf virus (isolate Fujian) (RDV).